The sequence spans 237 residues: GrpE protein homolog, mitochondrial (237 aa).

It belongs to the GrpE family. In terms of assembly, probable component of the PAM complex at least composed of a mitochondrial HSP70 protein, GrpE, tim-44, tim-16 and tim-14/dnj-21.

The protein localises to the mitochondrion matrix. Functionally, essential component of the PAM complex, a complex required for the translocation of transit peptide-containing proteins from the inner membrane into the mitochondrial matrix in an ATP-dependent manner. Seems to control the nucleotide-dependent binding of mitochondrial HSP70 to substrate proteins. The polypeptide is GrpE protein homolog, mitochondrial (Caenorhabditis elegans).